A 709-amino-acid polypeptide reads, in one-letter code: Anillin-like protein 3 (709 aa).

Positions 584–705 constitute a PH domain; that stretch reads DMEYRGFLHI…WLSAINDTLD (122 aa).

In Caenorhabditis elegans, this protein is Anillin-like protein 3 (ani-3).